The primary structure comprises 214 residues: Thymidylate kinase (214 aa).

11 to 18 (GPEGAGKT) contacts ATP.

Belongs to the thymidylate kinase family.

The enzyme catalyses dTMP + ATP = dTDP + ADP. In terms of biological role, phosphorylation of dTMP to form dTDP in both de novo and salvage pathways of dTTP synthesis. The protein is Thymidylate kinase of Leuconostoc citreum (strain KM20).